The primary structure comprises 231 residues: 7-cyano-7-deazaguanine synthase (231 aa).

8–18 (FSGGQDSTTCL) is an ATP binding site. Positions 188, 197, 200, and 203 each coordinate Zn(2+).

Belongs to the QueC family. Requires Zn(2+) as cofactor.

It catalyses the reaction 7-carboxy-7-deazaguanine + NH4(+) + ATP = 7-cyano-7-deazaguanine + ADP + phosphate + H2O + H(+). It functions in the pathway purine metabolism; 7-cyano-7-deazaguanine biosynthesis. In terms of biological role, catalyzes the ATP-dependent conversion of 7-carboxy-7-deazaguanine (CDG) to 7-cyano-7-deazaguanine (preQ(0)). The protein is 7-cyano-7-deazaguanine synthase of Escherichia coli (strain ATCC 8739 / DSM 1576 / NBRC 3972 / NCIMB 8545 / WDCM 00012 / Crooks).